Reading from the N-terminus, the 191-residue chain is SCO2-like protein RP031 (191 aa).

This sequence belongs to the SCO1/2 family.

The polypeptide is SCO2-like protein RP031 (Rickettsia prowazekii (strain Madrid E)).